The chain runs to 525 residues: GMP synthase [glutamine-hydrolyzing] (525 aa).

The region spanning 9–207 (KILILDFGSQ…IVDICGCDTL (199 aa)) is the Glutamine amidotransferase type-1 domain. Cys-86 acts as the Nucleophile in catalysis. Catalysis depends on residues His-181 and Glu-183. The GMPS ATP-PPase domain maps to 208–400 (WTPANIAQDA…LGLPYDMVYR (193 aa)). 235–241 (SGGVDSS) contributes to the ATP binding site.

In terms of assembly, homodimer.

It catalyses the reaction XMP + L-glutamine + ATP + H2O = GMP + L-glutamate + AMP + diphosphate + 2 H(+). Its pathway is purine metabolism; GMP biosynthesis; GMP from XMP (L-Gln route): step 1/1. In terms of biological role, catalyzes the synthesis of GMP from XMP. The protein is GMP synthase [glutamine-hydrolyzing] of Marinomonas sp. (strain MWYL1).